Reading from the N-terminus, the 189-residue chain is UPF0494 membrane protein C977.06 (189 aa).

The next 3 helical transmembrane spans lie at 78–98 (WPLL…NFEV), 120–140 (IWGP…GLIY), and 148–168 (AIPL…VAMV).

This sequence belongs to the UPF0494 family.

It is found in the membrane. The polypeptide is UPF0494 membrane protein C977.06 (Schizosaccharomyces pombe (strain 972 / ATCC 24843) (Fission yeast)).